The sequence spans 647 residues: Threonine--tRNA ligase (647 aa).

In terms of domain architecture, TGS spans 1-61 (MIKITFPDGA…EEDGSIEIVT (61 aa)). The catalytic stretch occupies residues 240–538 (DHRKLGKELD…LIETYKGAFP (299 aa)). Zn(2+)-binding residues include C334, H385, and H515.

The protein belongs to the class-II aminoacyl-tRNA synthetase family. Homodimer. Zn(2+) is required as a cofactor.

Its subcellular location is the cytoplasm. The enzyme catalyses tRNA(Thr) + L-threonine + ATP = L-threonyl-tRNA(Thr) + AMP + diphosphate + H(+). Functionally, catalyzes the attachment of threonine to tRNA(Thr) in a two-step reaction: L-threonine is first activated by ATP to form Thr-AMP and then transferred to the acceptor end of tRNA(Thr). Also edits incorrectly charged L-seryl-tRNA(Thr). The sequence is that of Threonine--tRNA ligase from Streptococcus agalactiae serotype III (strain NEM316).